The chain runs to 360 residues: MDTQRFVITMNGDNISFIVGDNAINHLSEEAGKYDSIVIMISKTVEEMYANHIPDVGSFGNSVVKISLNDGESLKSLRNYQKIVKVLLERKVDRRSLLVYIGGGTVGDLAGFVASTYKRGVMMIAVPTTLLAQVDSSIGGKNGLDFSDVKNVIGTFYNPYMVIDDTVFLKNNSFIIREGMSEVIKYAIISGGDMYDTLNRCSIDNFDACATNIIKLSVKIKSEIVNRDFYDRTGIRSVLNLGHTIAHGIEGATKGSISHGKAVATGMLVEAHIGEKYGNTNHEVIEAIRDLMKRYGIEELNLKEIGPGNILRYISNDKKIMEGYINMPVPSEIGKVITMKATERMISDGINTFIKENDAS.

Residues 70–75 (DGESLK), 128–129 (TT), lysine 141, and lysine 150 contribute to the NAD(+) site. Glutamate 182, histidine 243, and histidine 259 together coordinate Zn(2+).

It belongs to the sugar phosphate cyclases superfamily. Dehydroquinate synthase family. It depends on NAD(+) as a cofactor. Requires Co(2+) as cofactor. Zn(2+) serves as cofactor.

The protein localises to the cytoplasm. The catalysed reaction is 7-phospho-2-dehydro-3-deoxy-D-arabino-heptonate = 3-dehydroquinate + phosphate. It functions in the pathway metabolic intermediate biosynthesis; chorismate biosynthesis; chorismate from D-erythrose 4-phosphate and phosphoenolpyruvate: step 2/7. Catalyzes the conversion of 3-deoxy-D-arabino-heptulosonate 7-phosphate (DAHP) to dehydroquinate (DHQ). This Thermoplasma volcanium (strain ATCC 51530 / DSM 4299 / JCM 9571 / NBRC 15438 / GSS1) protein is 3-dehydroquinate synthase.